Reading from the N-terminus, the 258-residue chain is Tryptophan synthase alpha chain (258 aa).

Residues glutamate 47 and aspartate 58 each act as proton acceptor in the active site.

The protein belongs to the TrpA family. In terms of assembly, tetramer of two alpha and two beta chains.

The catalysed reaction is (1S,2R)-1-C-(indol-3-yl)glycerol 3-phosphate + L-serine = D-glyceraldehyde 3-phosphate + L-tryptophan + H2O. The protein operates within amino-acid biosynthesis; L-tryptophan biosynthesis; L-tryptophan from chorismate: step 5/5. The alpha subunit is responsible for the aldol cleavage of indoleglycerol phosphate to indole and glyceraldehyde 3-phosphate. In Bacillus cereus (strain ATCC 14579 / DSM 31 / CCUG 7414 / JCM 2152 / NBRC 15305 / NCIMB 9373 / NCTC 2599 / NRRL B-3711), this protein is Tryptophan synthase alpha chain.